A 308-amino-acid chain; its full sequence is Aspartate carbamoyltransferase catalytic subunit (308 aa).

Residues Arg-55 and Thr-56 each contribute to the carbamoyl phosphate site. Lys-84 serves as a coordination point for L-aspartate. Arg-105, His-133, and Gln-136 together coordinate carbamoyl phosphate. Arg-167 and Arg-228 together coordinate L-aspartate. Carbamoyl phosphate is bound by residues Leu-267 and Pro-268.

This sequence belongs to the aspartate/ornithine carbamoyltransferase superfamily. ATCase family. As to quaternary structure, heterooligomer of catalytic and regulatory chains.

It carries out the reaction carbamoyl phosphate + L-aspartate = N-carbamoyl-L-aspartate + phosphate + H(+). It functions in the pathway pyrimidine metabolism; UMP biosynthesis via de novo pathway; (S)-dihydroorotate from bicarbonate: step 2/3. Catalyzes the condensation of carbamoyl phosphate and aspartate to form carbamoyl aspartate and inorganic phosphate, the committed step in the de novo pyrimidine nucleotide biosynthesis pathway. In Methanocella arvoryzae (strain DSM 22066 / NBRC 105507 / MRE50), this protein is Aspartate carbamoyltransferase catalytic subunit.